A 392-amino-acid polypeptide reads, in one-letter code: Galactokinase (392 aa).

Residue 37 to 40 (EHTD) participates in substrate binding. ATP-binding positions include Ser71 and 128–134 (GSGLSSS). Mg(2+)-binding residues include Ser134 and Glu166. Catalysis depends on Asp178, which acts as the Proton acceptor. Tyr228 serves as a coordination point for substrate.

The protein belongs to the GHMP kinase family. GalK subfamily.

It is found in the cytoplasm. The enzyme catalyses alpha-D-galactose + ATP = alpha-D-galactose 1-phosphate + ADP + H(+). The protein operates within carbohydrate metabolism; galactose metabolism. Catalyzes the transfer of the gamma-phosphate of ATP to D-galactose to form alpha-D-galactose-1-phosphate (Gal-1-P). The sequence is that of Galactokinase from Streptococcus pneumoniae (strain ATCC BAA-255 / R6).